Consider the following 91-residue polypeptide: Probable Fe(2+)-trafficking protein (91 aa).

This sequence belongs to the Fe(2+)-trafficking protein family.

In terms of biological role, could be a mediator in iron transactions between iron acquisition and iron-requiring processes, such as synthesis and/or repair of Fe-S clusters in biosynthetic enzymes. The sequence is that of Probable Fe(2+)-trafficking protein from Histophilus somni (strain 129Pt) (Haemophilus somnus).